Reading from the N-terminus, the 157-residue chain is MNINLTMFGQLIMFTMFTWFCMKFVWPPIVMTMEERKKRIESGLLAAERGRSEQEEMQAKAQEMINQSKDQAAEIIANATRQASNMVEDAKDVALKEAGKVKAQAQAQLEQDTIQTRNELKNQMSDLIMQGVSVVLAKEVDVKVHQKMLGKLSQSLS.

Residues Met-7–Ile-29 traverse the membrane as a helical segment.

It belongs to the ATPase B chain family. In terms of assembly, F-type ATPases have 2 components, F(1) - the catalytic core - and F(0) - the membrane proton channel. F(1) has five subunits: alpha(3), beta(3), gamma(1), delta(1), epsilon(1). F(0) has three main subunits: a(1), b(2) and c(10-14). The alpha and beta chains form an alternating ring which encloses part of the gamma chain. F(1) is attached to F(0) by a central stalk formed by the gamma and epsilon chains, while a peripheral stalk is formed by the delta and b chains.

It localises to the cell inner membrane. F(1)F(0) ATP synthase produces ATP from ADP in the presence of a proton or sodium gradient. F-type ATPases consist of two structural domains, F(1) containing the extramembraneous catalytic core and F(0) containing the membrane proton channel, linked together by a central stalk and a peripheral stalk. During catalysis, ATP synthesis in the catalytic domain of F(1) is coupled via a rotary mechanism of the central stalk subunits to proton translocation. Functionally, component of the F(0) channel, it forms part of the peripheral stalk, linking F(1) to F(0). This chain is ATP synthase subunit b, found in Ruthia magnifica subsp. Calyptogena magnifica.